Reading from the N-terminus, the 346-residue chain is Inner membrane protein YnjI (346 aa).

The Periplasmic portion of the chain corresponds to 1–38 (MKKVLLQNHPGSEKYSFNGWEIFNSNFERMIKENKAML). The helical transmembrane segment at 39 to 59 (LCKWGFYLTCVVAVMFVFAAI) threads the bilayer. At 60-68 (TSNGLNERG) the chain is on the cytoplasmic side. A helical transmembrane segment spans residues 69–89 (LITAGCSFLYLLIMMGLIVRA). Residues 90-234 (GFKAKKEQLH…DCANHSSGKS (145 aa)) lie on the Periplasmic side of the membrane. The chain crosses the membrane as a helical span at residues 235 to 255 (SAKLIWAAELSWMISISSTAF). Residues 256–346 (QNGTIEEELA…PWGASSVKYS (91 aa)) are Cytoplasmic-facing.

The protein resides in the cell inner membrane. This Escherichia coli (strain K12) protein is Inner membrane protein YnjI (ynjI).